Consider the following 207-residue polypeptide: MSRYRGPRLRIIRRLQNLPGLTNKLVESKKKKVSGSDQSIQKKVSQYGIRLEAKQRLRFNYGLTERQLLNYVRIARCAKGSTGQILLQLLEMRLDNILFRLGFVPTIPSARQLINHRHILVNNRIVDVPSFHCKPKDIITIEAPKTYQSILSKRLESFAKDQIPEHLTLSLSEPKKPKGFVNYLINRESIGLKINELLVVEYYSRKA.

One can recognise an S4 RNA-binding domain in the interval M92–K153.

The protein belongs to the universal ribosomal protein uS4 family. Part of the 30S ribosomal subunit. Contacts protein S5. The interaction surface between S4 and S5 is involved in control of translational fidelity.

The protein localises to the plastid. It is found in the chloroplast. Its function is as follows. One of the primary rRNA binding proteins, it binds directly to 16S rRNA where it nucleates assembly of the body of the 30S subunit. With S5 and S12 plays an important role in translational accuracy. The polypeptide is Small ribosomal subunit protein uS4c (rps4) (Equisetum hyemale (Dutch rush)).